The chain runs to 254 residues: Putative biopolymer transport protein ExbB-like 1 (254 aa).

Helical transmembrane passes span 39-59, 141-161, and 185-205; these read GGVVMFPLLLLSILALTTAFE, LETIIALAPLLGLLGTVTGLI, and IGEALITTAAGMMVAIFALLV.

Belongs to the ExbB/TolQ family.

Its subcellular location is the cell inner membrane. Its function is as follows. Involved in the TonB-dependent energy-dependent transport of various receptor-bound substrates. Protects ExbD from proteolytic degradation and functionally stabilizes TonB. The sequence is that of Putative biopolymer transport protein ExbB-like 1 from Synechocystis sp. (strain ATCC 27184 / PCC 6803 / Kazusa).